A 437-amino-acid chain; its full sequence is Argininosuccinate lyase (437 aa).

It belongs to the lyase 1 family. Argininosuccinate lyase subfamily.

It localises to the cytoplasm. The enzyme catalyses 2-(N(omega)-L-arginino)succinate = fumarate + L-arginine. It functions in the pathway amino-acid biosynthesis; L-arginine biosynthesis; L-arginine from L-ornithine and carbamoyl phosphate: step 3/3. This chain is Argininosuccinate lyase, found in Clostridium novyi (strain NT).